The chain runs to 1535 residues: Protein artichoke (1535 aa).

A signal peptide spans 1-19; the sequence is MMLLPIFLLLCIGINLIRA. 34 LRR repeats span residues 64–87, 89–110, 112–135, 136–157, 158–181, 183–206, 207–230, 231–256, 257–280, 281–304, 306–328, 331–356, 357–380, 382–404, 406–429, 430–452, 453–476, 478–500, 521–545, 548–571, 573–595, 597–619, 620–643, 645–667, 669–691, 692–714, 716–738, 739–762, 764–786, 788–810, 811–834, 835–858, 860–882, and 883–906; these read KGRI…FFGS, QIVR…WLNE, ENGL…SLNG, MINM…DFSG, LLSL…LFRH, PKLQ…LFDG, LISL…ALSR, LPNL…IVKD, LEHL…SFVD, LPNL…AFLR, PQLK…SLLQ, GSGV…LLDA, LPRL…ALRG, GTLE…ALMA, PALR…FWNL, PGLK…LLAG, LPSL…SFRH, PLLE…TLIH, LPRI…ASKD, LPNL…GFQG, MELR…SFIG, QRLE…ALLP, LAEL…FFSN, SRLE…AFDT, RSLE…LGNL, NNLR…VIGG, RNVV…TFRN, LPKL…ALKG, DELQ…VFEE, PSLL…SFHN, ANSL…GLRS, MRNL…PLKA, NWLV…PFET, and MPRL…TFRN. The region spanning 919 to 963 is the LRRCT domain; the sequence is NPIDCNCEMQWLSVWLQETNFPYPGPKCQDGRLLRSARMERSLCV. Disordered regions lie at residues 1036 to 1055, 1253 to 1331, 1377 to 1416, and 1429 to 1449; these read HSAI…NSNI, TQAR…DSQY, VTTT…GRST, and AQPT…EGVA. Residues 1253-1270 are compositionally biased toward polar residues; sequence TQARPKPTKSSGESSETA. 2 stretches are compositionally biased toward low complexity: residues 1271–1285 and 1293–1315; these read TYEV…TTTT and TSTT…TQVT. Polar residues-rich tracts occupy residues 1316–1328 and 1377–1391; these read PAEN…TELD and VTTT…NQVT. Pro residues predominate over residues 1398-1407; the sequence is TVPPPPPASP.

The protein localises to the secreted. It is found in the extracellular space. The protein resides in the extracellular matrix. Its subcellular location is the cytoplasm. Functionally, required for normal morphology and function of ciliated sensory organs. The protein is Protein artichoke of Drosophila melanogaster (Fruit fly).